The following is a 511-amino-acid chain: Protoheme IX farnesyltransferase, mitochondrial (511 aa).

Residues methionine 1–alanine 23 constitute a mitochondrion transit peptide. Disordered stretches follow at residues methionine 1–serine 27 and histidine 50–aspartate 136. Low complexity-rich tracts occupy residues serine 52–threonine 79, arginine 104–alanine 115, and proline 126–aspartate 136. A run of 8 helical transmembrane segments spans residues leucine 168–phenylalanine 188, serine 197–cysteine 217, alanine 253–valine 273, proline 275–leucine 295, threonine 303–glycine 323, leucine 344–leucine 364, alanine 398–valine 418, and alanine 444–alanine 464.

It belongs to the UbiA prenyltransferase family.

It is found in the mitochondrion membrane. Its function is as follows. Converts protoheme IX and farnesyl diphosphate to heme O. The chain is Protoheme IX farnesyltransferase, mitochondrial (pft-1) from Neurospora crassa (strain ATCC 24698 / 74-OR23-1A / CBS 708.71 / DSM 1257 / FGSC 987).